The chain runs to 123 residues: Large ribosomal subunit protein bL12 (123 aa).

The protein belongs to the bacterial ribosomal protein bL12 family. In terms of assembly, homodimer. Part of the ribosomal stalk of the 50S ribosomal subunit. Forms a multimeric L10(L12)X complex, where L10 forms an elongated spine to which 2 to 4 L12 dimers bind in a sequential fashion. Binds GTP-bound translation factors.

In terms of biological role, forms part of the ribosomal stalk which helps the ribosome interact with GTP-bound translation factors. Is thus essential for accurate translation. The sequence is that of Large ribosomal subunit protein bL12 from Clostridium kluyveri (strain NBRC 12016).